The chain runs to 58 residues: Mastoparan-VT7 (58 aa).

The signal sequence occupies residues 1–27 (MKNTILILFTAFIALLGFFGMSAEALA). 4 AXPX repeats span residues 27-30 (ADPK), 31-34 (ADPL), 35-38 (AGPN), and 41-44 (ADPE). The propeptide occupies 28–45 (DPKADPLAGPNPDADPEA).

It belongs to the MCD family. Mastoparan subfamily. In terms of tissue distribution, expressed by the venom gland.

The protein localises to the secreted. The synthetic peptide shows antimicrobial activities against Gram-negative bacteria (but not against all strains tested), Gram-positive bacteria (all strains tested) and the fungi C.albicans (but not C.parapsilosis). Exhibits little hemolytic activity against washed human erythrocytes. This is Mastoparan-VT7 from Vespa tropica (Greater banded hornet).